We begin with the raw amino-acid sequence, 226 residues long: High affinity heme transporter (226 aa).

An N-terminal signal peptide occupies residues 1-20 (MISLKIYFVLIFLFLKGINS). The tract at residues 72-101 (CDTTILSETNNVTGSCYVANCANDTVLEIC) is heme binding. S199 carries the GPI-anchor amidated serine lipid modification. A propeptide spans 200–226 (SASSTIFKPSYFISCLLSVGLYLVLNF) (removed in mature form).

The protein localises to the cell membrane. The protein resides in the vacuole membrane. Functionally, high affinity heme transporter involved in the assimilation of exogenous heme during conditions of low cellular iron. This Schizosaccharomyces pombe (strain 972 / ATCC 24843) (Fission yeast) protein is High affinity heme transporter.